Reading from the N-terminus, the 345-residue chain is S-adenosylmethionine:tRNA ribosyltransferase-isomerase (345 aa).

The protein belongs to the QueA family. Monomer.

The protein resides in the cytoplasm. The enzyme catalyses 7-aminomethyl-7-carbaguanosine(34) in tRNA + S-adenosyl-L-methionine = epoxyqueuosine(34) in tRNA + adenine + L-methionine + 2 H(+). The protein operates within tRNA modification; tRNA-queuosine biosynthesis. Its function is as follows. Transfers and isomerizes the ribose moiety from AdoMet to the 7-aminomethyl group of 7-deazaguanine (preQ1-tRNA) to give epoxyqueuosine (oQ-tRNA). The protein is S-adenosylmethionine:tRNA ribosyltransferase-isomerase of Shewanella putrefaciens (strain CN-32 / ATCC BAA-453).